The sequence spans 544 residues: uncharacterized protein (544 aa).

The first 34 residues, 1 to 34, serve as a signal peptide directing secretion; it reads MIARRMLCARPWGPSCVVCALCGALAALVPAVGA. Positions 38-69 are disordered; sequence AVPAPGTPAPPAHTASEAVPPAPEPRAEGEQP.

Belongs to the TP096X family.

This is an uncharacterized protein from Treponema pallidum (strain Nichols).